The primary structure comprises 29 residues: Cyclotide mden-C (29 aa).

Residues 1-29 (GKPICGETCFKGKCYTPGCTCSYPVCKKN) constitute a cross-link (cyclopeptide (Gly-Asn)). Cystine bridges form between Cys-5–Cys-19, Cys-9–Cys-21, and Cys-14–Cys-26.

This sequence belongs to the cyclotide family. In terms of processing, this is a cyclic peptide.

Its function is as follows. Probably participates in a plant defense mechanism. In Melicytus dentatus (Tree violet), this protein is Cyclotide mden-C.